A 289-amino-acid polypeptide reads, in one-letter code: Protease HtpX homolog (289 aa).

Helical transmembrane passes span 11–31 (AALF…IGAG) and 36–54 (APIW…YGYW). Histidine 138 is a Zn(2+) binding site. The active site involves glutamate 139. Position 142 (histidine 142) interacts with Zn(2+). The next 2 membrane-spanning stretches (helical) occupy residues 153 to 173 (VAAA…FFGG) and 182 to 202 (LAMI…QMAI). Glutamate 207 contacts Zn(2+).

This sequence belongs to the peptidase M48B family. It depends on Zn(2+) as a cofactor.

Its subcellular location is the cell membrane. This chain is Protease HtpX homolog, found in Pseudarthrobacter chlorophenolicus (strain ATCC 700700 / DSM 12829 / CIP 107037 / JCM 12360 / KCTC 9906 / NCIMB 13794 / A6) (Arthrobacter chlorophenolicus).